A 141-amino-acid polypeptide reads, in one-letter code: uncharacterized protein (141 aa).

The next 3 membrane-spanning stretches (helical) occupy residues 32–52 (LIVL…TSII), 69–89 (IIAL…IAGF), and 109–129 (FTGY…PIAY).

It localises to the cell membrane. This is an uncharacterized protein from Methanocaldococcus jannaschii (strain ATCC 43067 / DSM 2661 / JAL-1 / JCM 10045 / NBRC 100440) (Methanococcus jannaschii).